We begin with the raw amino-acid sequence, 71 residues long: UPF0346 protein SAK_1533 (71 aa).

This sequence belongs to the UPF0346 family.

This is UPF0346 protein SAK_1533 from Streptococcus agalactiae serotype Ia (strain ATCC 27591 / A909 / CDC SS700).